Reading from the N-terminus, the 493-residue chain is Vinyl phenol reductase (493 aa).

The FAD site is built by Ala-19, Glu-38, Ser-46, Thr-50, Gly-52, Ala-156, Asp-224, Asn-448, and Val-467.

Belongs to the FAD-dependent oxidoreductase 2 family. FRD/SDH subfamily. FAD serves as cofactor.

It catalyses the reaction 4-vinylphenol + NADH + H(+) = 4-ethylphenol + NAD(+). It carries out the reaction 3,4-dihydroxystyrene + NADH + H(+) = 4-ethylcatechol + NAD(+). The enzyme catalyses 2-methoxy-4-vinylphenol + NADH + H(+) = 4-ethyl-2-methoxyphenol + NAD(+). Its function is as follows. Involved in the production of ethylphenols during the degradation of hydroxycinnamic acids. Catalyzes the reduction of vinylphenols (4-vinylphenol (4-hydroxystyrene), 4-vinylcatechol (3,4-dihydroxystyrene), and 4-vinylguaiacol (2-methoxy-4-vinylphenol)) to their corresponding ethylphenols (4-ethylphenol, 4-ethylcatechol, and 4-ethylguaiacol, respectively) in the presence of NADH. These compounds are considered the most important flavor components of fermented soy sauce, and, on the other hand, are considered off flavor and responsible for sensorial wine and cider alteration. The 4-ethylphenol produced by the gut bacteria L.plantarum strain WCFS1 can get subsequent sulfation to 4-ethylphenyl sulfate (4EPS) by host sulfotransferase (SULT1A1); 4EPS can enter the brain and seems to alter brain activity. Therefore, this enzyme likely plays a role in gut microbiota-host metabolic interactions. The protein is Vinyl phenol reductase of Lactiplantibacillus plantarum (strain ATCC BAA-793 / NCIMB 8826 / WCFS1) (Lactobacillus plantarum).